Reading from the N-terminus, the 599-residue chain is Proline--tRNA ligase (599 aa).

Belongs to the class-II aminoacyl-tRNA synthetase family. ProS type 1 subfamily. Homodimer.

It localises to the cytoplasm. The enzyme catalyses tRNA(Pro) + L-proline + ATP = L-prolyl-tRNA(Pro) + AMP + diphosphate. Catalyzes the attachment of proline to tRNA(Pro) in a two-step reaction: proline is first activated by ATP to form Pro-AMP and then transferred to the acceptor end of tRNA(Pro). As ProRS can inadvertently accommodate and process non-cognate amino acids such as alanine and cysteine, to avoid such errors it has two additional distinct editing activities against alanine. One activity is designated as 'pretransfer' editing and involves the tRNA(Pro)-independent hydrolysis of activated Ala-AMP. The other activity is designated 'posttransfer' editing and involves deacylation of mischarged Ala-tRNA(Pro). The misacylated Cys-tRNA(Pro) is not edited by ProRS. The polypeptide is Proline--tRNA ligase (Prochlorococcus marinus (strain MIT 9313)).